Here is a 255-residue protein sequence, read N- to C-terminus: MRHPLVMGNWKLNGSTHMVNELIAGLRKELSTVDGCGVAIAPPAIYLNQAKHELAGSRIALGAQNVDVNLSGAFTGETSAEMLKDIGAQYIIIGHSERRTYHQESDELIAKKFGVLKEIGLIPVLCIGESEAENEAGQTEAVCAKQLDAVLNTLGVKAFEGAVIAYEPIWAIGTGKSATPAQAQAVHKFIRDHIAKQDAAVAAQVIIQYGGSVNDKNAAELFTQPDIDGALVGGASLKADAFAVIVKAAAKAKKA.

9 to 11 contributes to the substrate binding site; sequence NWK. The Electrophile role is filled by H95. Residue E167 is the Proton acceptor of the active site. Residues G173, S212, and 233–234 each bind substrate; that span reads GG.

It belongs to the triosephosphate isomerase family. As to quaternary structure, homodimer.

The protein resides in the cytoplasm. It catalyses the reaction D-glyceraldehyde 3-phosphate = dihydroxyacetone phosphate. It participates in carbohydrate biosynthesis; gluconeogenesis. The protein operates within carbohydrate degradation; glycolysis; D-glyceraldehyde 3-phosphate from glycerone phosphate: step 1/1. Functionally, involved in the gluconeogenesis. Catalyzes stereospecifically the conversion of dihydroxyacetone phosphate (DHAP) to D-glyceraldehyde-3-phosphate (G3P). This is Triosephosphate isomerase from Yersinia pseudotuberculosis serotype O:1b (strain IP 31758).